A 435-amino-acid chain; its full sequence is MATVVIAGRANVGKSTLFNRLIGRRKAITEKIEGVTRDIIKGLVVYNETSFLLYDTCGVFESTRDPVLLAMRDKAFEAFRKADLILFVVDGRSGITSEDEYVAQQLRKIAKKVLMVINKSENMSVVEKNLPDIMKLGFAEYIPVSAQHGNNIDELLDKITNLLRESGEKSMLFKESSPKIAIVGKPNVGKSSLFNALLNMDRATVTPVPGTTRDPVDEMIEINGKKYILVDTAGMRRKSRIERKTIEQFSISRTIDTIQSADVVLLVIDATEGVTRQDKRIADLILSSGRAMVCVINKFDLVNVRKKDYEAALFTEMPFINFCRIVFTSAVKKSGLEKLFNAIDEAYESYCRKVPQQLLSKLASQLPLLSPALSRKNLRIYSIKQIKIKPPKFVIMVNKKELTDYQTEKTLQRFIRERVDQFTGTPLVIEFKSRR.

EngA-type G domains are found at residues 2–167 (ATVV…RESG) and 178–351 (PKIA…ESYC). GTP-binding positions include 8 to 15 (GRANVGKS), 55 to 59 (DTCGV), 118 to 121 (NKSE), 184 to 191 (GKPNVGKS), 231 to 235 (DTAGM), and 297 to 300 (NKFD). Residues 352–435 (RKVPQQLLSK…PLVIEFKSRR (84 aa)) enclose the KH-like domain.

It belongs to the TRAFAC class TrmE-Era-EngA-EngB-Septin-like GTPase superfamily. EngA (Der) GTPase family. Associates with the 50S ribosomal subunit.

GTPase that plays an essential role in the late steps of ribosome biogenesis. In Pseudothermotoga lettingae (strain ATCC BAA-301 / DSM 14385 / NBRC 107922 / TMO) (Thermotoga lettingae), this protein is GTPase Der.